Here is a 307-residue protein sequence, read N- to C-terminus: Transmembrane protein 200B (307 aa).

The segment at 1–38 (MTAGSPEECGEVRRSPEGRVSRLGRRLGRRRRPRSPPE) is disordered. A compositionally biased stretch (basic and acidic residues) spans 10–20 (GEVRRSPEGRV). Over residues 22–34 (RLGRRLGRRRRPR) the composition is skewed to basic residues. Residues 53–73 (GAFAALGALVVLVGMGIAVAG) form a helical membrane-spanning segment. The interval 81–111 (APGSRAANASSPQMSELRREGRGGGRAHGPH) is disordered. N88 carries an N-linked (GlcNAc...) asparagine glycan. A compositionally biased stretch (basic and acidic residues) spans 96-111 (ELRREGRGGGRAHGPH). Residues 116–136 (LLGPVIMGVGLFVFICANTLL) traverse the membrane as a helical segment. The tract at residues 180-211 (AVGCAEPEIWDPSPRRGTSPVPSVRSLRSEPA) is disordered.

It belongs to the TMEM200 family.

The protein resides in the membrane. This is Transmembrane protein 200B (TMEM200B) from Homo sapiens (Human).